The chain runs to 119 residues: RKLAFRYRRVKELYTTYKNNVGGLLGPAKRDAWLQLRAEVEALTDSWLTHALKSLSIISSRSNCVNVLVTTTQLIPALAKVLLYSLGAVFPIENIYSATKIGKESCFERIVSRFGTNIT.

Belongs to the HAD-like hydrolase superfamily. EYA family. Mg(2+) is required as a cofactor.

Its subcellular location is the cytoplasm. The protein localises to the nucleus. It carries out the reaction O-phospho-L-tyrosyl-[protein] + H2O = L-tyrosyl-[protein] + phosphate. Tyrosine phosphatase that specifically dephosphorylates 'Tyr-142' of histone H2AX (H2AXY142ph). 'Tyr-142' phosphorylation of histone H2AX plays a central role in DNA repair and acts as a mark that distinguishes between apoptotic and repair responses to genotoxic stress. Promotes efficient DNA repair by dephosphorylating H2AX, promoting the recruitment of DNA repair complexes containing MDC1. Its function as histone phosphatase probably explains its role in transcription regulation during organogenesis. May be involved in development of the eye. This Takifugu rubripes (Japanese pufferfish) protein is Protein phosphatase EYA4 (eya4).